Here is a 355-residue protein sequence, read N- to C-terminus: Protein RecA (355 aa).

73–80 serves as a coordination point for ATP; it reads GPESSGKT.

The protein belongs to the RecA family.

The protein resides in the cytoplasm. In terms of biological role, can catalyze the hydrolysis of ATP in the presence of single-stranded DNA, the ATP-dependent uptake of single-stranded DNA by duplex DNA, and the ATP-dependent hybridization of homologous single-stranded DNAs. It interacts with LexA causing its activation and leading to its autocatalytic cleavage. The protein is Protein RecA of Solidesulfovibrio magneticus (strain ATCC 700980 / DSM 13731 / RS-1) (Desulfovibrio magneticus).